The sequence spans 339 residues: Small ribosomal subunit protein uS3m (339 aa).

The protein belongs to the universal ribosomal protein uS3 family.

It is found in the mitochondrion. Essential for mitochondrial protein synthesis and required for the maturation of small ribosomal subunits. The protein is Small ribosomal subunit protein uS3m (VAR1) of Candida glabrata (strain ATCC 2001 / BCRC 20586 / JCM 3761 / NBRC 0622 / NRRL Y-65 / CBS 138) (Yeast).